The chain runs to 339 residues: Phosphate acyltransferase (339 aa).

It belongs to the PlsX family. Homodimer. Probably interacts with PlsY.

It localises to the cytoplasm. It carries out the reaction a fatty acyl-[ACP] + phosphate = an acyl phosphate + holo-[ACP]. Its pathway is lipid metabolism; phospholipid metabolism. Catalyzes the reversible formation of acyl-phosphate (acyl-PO(4)) from acyl-[acyl-carrier-protein] (acyl-ACP). This enzyme utilizes acyl-ACP as fatty acyl donor, but not acyl-CoA. The protein is Phosphate acyltransferase of Helicobacter acinonychis (strain Sheeba).